The sequence spans 356 residues: Peptide chain release factor 1 (356 aa).

Position 233 is an N5-methylglutamine (glutamine 233).

This sequence belongs to the prokaryotic/mitochondrial release factor family. Methylated by PrmC. Methylation increases the termination efficiency of RF1.

The protein localises to the cytoplasm. In terms of biological role, peptide chain release factor 1 directs the termination of translation in response to the peptide chain termination codons UAG and UAA. This Syntrophotalea carbinolica (strain DSM 2380 / NBRC 103641 / GraBd1) (Pelobacter carbinolicus) protein is Peptide chain release factor 1.